A 1386-amino-acid polypeptide reads, in one-letter code: Adhesin AWP3b (1386 aa).

Positions 1 to 19 (MISFVTLLAILGLLSISWA) are cleaved as a signal peptide. Disulfide bonds link C115-C145, C144-C178, and C304-C341. An N-linked (GlcNAc...) asparagine glycan is attached at N117. N-linked (GlcNAc...) asparagine glycans are attached at residues N315, N345, N468, and N526. The segment at 429–507 (TTDSPGHTIT…SSPTSDFSSV (79 aa)) is disordered. Disordered regions lie at residues 530 to 553 (IVDS…SSSM) and 612 to 690 (TTDS…FSSV). N-linked (GlcNAc...) asparagine glycans are attached at residues N651 and N709. Disordered regions lie at residues 714 to 739 (VDSS…MSSS) and 795 to 873 (TTDS…FSSV). Residues N834, N898, N1008, N1017, and N1096 are each glycosylated (N-linked (GlcNAc...) asparagine). Residues 1000-1032 (TIQESELSNTSRTTMTSNSSVSISSTSSRSSFS) are disordered. Polar residues-rich tracts occupy residues 1140 to 1150 (SHPVATNSGDK) and 1159 to 1177 (QVST…SSFD). The tract at residues 1140-1186 (SHPVATNSGDKPTTPKRSEQVSTTMTSSGPTPDTSSFDTDGMSAYSR) is disordered. N1197 is a glycosylation site (N-linked (GlcNAc...) asparagine). Polar residues predominate over residues 1198–1218 (KSSTSQLGNNKQTFSNLQLES). Residues 1198-1227 (KSSTSQLGNNKQTFSNLQLESTRPHSENEV) form a disordered region. N1229 carries N-linked (GlcNAc...) asparagine glycosylation. The span at 1241-1259 (STYGTNNVNPLSPTGSISI) shows a compositional bias: polar residues. The disordered stretch occupies residues 1241 to 1269 (STYGTNNVNPLSPTGSISIPLTEDGQGDN). N1287 carries N-linked (GlcNAc...) asparagine glycosylation.

The protein resides in the secreted. It is found in the cell wall. Functionally, may play a role in cell adhesion. This Candida glabrata (strain ATCC 2001 / BCRC 20586 / JCM 3761 / NBRC 0622 / NRRL Y-65 / CBS 138) (Yeast) protein is Adhesin AWP3b.